The sequence spans 786 residues: Exo-beta-D-glucosaminidase (786 aa).

Substrate contacts are provided by residues Tyr-53, 102 to 103 (GE), 178 to 179 (DE), Glu-306, Glu-347, and Tyr-379. The active-site Proton donor is Glu-179. Catalysis depends on Glu-347, which acts as the Nucleophile.

This sequence belongs to the glycosyl hydrolase 35 family. Homodimer.

It is found in the cytoplasm. The enzyme catalyses beta-D-glucosaminyl-(1-&gt;4)-N-acetyl-D-glucosamine + H2O = D-glucosamine + N-acetyl-D-glucosamine. The protein operates within glycan degradation; chitin degradation. Functionally, exo-type enzyme that specifically cleaves the non-reducing terminal glycosidic bond of chitooligosaccharides. Catalyzes the hydrolysis of GlcN-GlcNAc to glucosamine (GlcN) and N-acetylglucosamine (GlcNAc). Involved in chitin degradation. Can also hydrolyze reduced chitobiose (GlcN2OH) and chitooligosaccharides of various chain lengths. The protein is Exo-beta-D-glucosaminidase of Thermococcus kodakarensis (strain ATCC BAA-918 / JCM 12380 / KOD1) (Pyrococcus kodakaraensis (strain KOD1)).